Reading from the N-terminus, the 62-residue chain is Photosystem II reaction center protein Z (62 aa).

2 helical membrane-spanning segments follow: residues 8–28 (AVFALIATSLILVIGVPVVFA) and 41–61 (FSGTSLWIGLVFLVGILNSLI).

Belongs to the PsbZ family. In terms of assembly, PSII is composed of 1 copy each of membrane proteins PsbA, PsbB, PsbC, PsbD, PsbE, PsbF, PsbH, PsbI, PsbJ, PsbK, PsbL, PsbM, PsbT, PsbY, PsbZ, Psb30/Ycf12, at least 3 peripheral proteins of the oxygen-evolving complex and a large number of cofactors. It forms dimeric complexes.

It localises to the plastid. Its subcellular location is the chloroplast thylakoid membrane. May control the interaction of photosystem II (PSII) cores with the light-harvesting antenna, regulates electron flow through the 2 photosystem reaction centers. PSII is a light-driven water plastoquinone oxidoreductase, using light energy to abstract electrons from H(2)O, generating a proton gradient subsequently used for ATP formation. The protein is Photosystem II reaction center protein Z of Piper cenocladum (Ant piper).